The primary structure comprises 88 residues: Small ribosomal subunit protein uS17 (88 aa).

The protein belongs to the universal ribosomal protein uS17 family. Part of the 30S ribosomal subunit.

In terms of biological role, one of the primary rRNA binding proteins, it binds specifically to the 5'-end of 16S ribosomal RNA. In Prochlorococcus marinus (strain MIT 9215), this protein is Small ribosomal subunit protein uS17.